The chain runs to 78 residues: Small ribosomal subunit protein bS18 (78 aa).

The protein belongs to the bacterial ribosomal protein bS18 family. As to quaternary structure, part of the 30S ribosomal subunit. Forms a tight heterodimer with protein bS6.

In terms of biological role, binds as a heterodimer with protein bS6 to the central domain of the 16S rRNA, where it helps stabilize the platform of the 30S subunit. In Lacticaseibacillus casei (strain BL23) (Lactobacillus casei), this protein is Small ribosomal subunit protein bS18.